The following is a 569-amino-acid chain: Sulfite reductase [NADPH] hemoprotein beta-component (569 aa).

[4Fe-4S] cluster-binding residues include Cys-433, Cys-439, Cys-478, and Cys-482. Position 482 (Cys-482) interacts with siroheme.

This sequence belongs to the nitrite and sulfite reductase 4Fe-4S domain family. In terms of assembly, alpha(8)-beta(8). The alpha component is a flavoprotein, the beta component is a hemoprotein. Siroheme serves as cofactor. The cofactor is [4Fe-4S] cluster.

It carries out the reaction hydrogen sulfide + 3 NADP(+) + 3 H2O = sulfite + 3 NADPH + 4 H(+). The protein operates within sulfur metabolism; hydrogen sulfide biosynthesis; hydrogen sulfide from sulfite (NADPH route): step 1/1. Component of the sulfite reductase complex that catalyzes the 6-electron reduction of sulfite to sulfide. This is one of several activities required for the biosynthesis of L-cysteine from sulfate. In Blochmanniella floridana, this protein is Sulfite reductase [NADPH] hemoprotein beta-component.